The following is a 376-amino-acid chain: Pyruvate dehydrogenase E1 component subunit beta-2, mitochondrial (376 aa).

A mitochondrion-targeting transit peptide spans 1–36 (MLGAARRQLGSGPMLGQVLRRLRPATAAAADAARAY). Glu99 lines the thiamine diphosphate pocket. 4 residues coordinate K(+): Ile152, Ala200, Ile201, and Asp203.

As to quaternary structure, tetramer of 2 alpha and 2 beta subunits. Thiamine diphosphate serves as cofactor.

Its subcellular location is the mitochondrion matrix. The enzyme catalyses N(6)-[(R)-lipoyl]-L-lysyl-[protein] + pyruvate + H(+) = N(6)-[(R)-S(8)-acetyldihydrolipoyl]-L-lysyl-[protein] + CO2. Its function is as follows. The pyruvate dehydrogenase complex catalyzes the overall conversion of pyruvate to acetyl-CoA and CO(2). It contains multiple copies of three enzymatic components: pyruvate dehydrogenase (E1), dihydrolipoamide acetyltransferase (E2) and lipoamide dehydrogenase (E3). This chain is Pyruvate dehydrogenase E1 component subunit beta-2, mitochondrial, found in Oryza sativa subsp. japonica (Rice).